The sequence spans 284 residues: Pheromone-regulated membrane protein 4 (284 aa).

Residues isoleucine 20–tryptophan 38 traverse the membrane as a helical segment. The Glutaredoxin domain maps to arginine 157–asparagine 272.

It is found in the membrane. This is Pheromone-regulated membrane protein 4 (PRM4) from Saccharomyces cerevisiae (strain ATCC 204508 / S288c) (Baker's yeast).